A 602-amino-acid chain; its full sequence is MTDTDLITAGESTDGKPSDAAATDPPDLNADEPAGSLATMVLPELRALANRAGVKGTSGMRKNELIAAIEEIRRQANGAPAVDRSAQEHDKGDRPPSSEAPATQGEQTPTEQIDSQSQQVRPERRSATREAGPSGSGERAGTAADDTDNRQGGQQDAKTEERGTDAGGDQGGDQQASGGQQARGDEDGEARQGRRGRRFRDRRRRGERSGDGAEAELREDDVVQPVAGILDVLDNYAFVRTSGYLPGPHDVYVSMNMVRKNGMRRGDAVTGAVRVPKEGEQPNQRQKFNPLVRLDSINGGSVEDAKKRPEFGKLTPLYPNQRLRLETSTERLTTRVIDLIMPIGKGQRALIVSPPKAGKTTILQDIANAITRNNPECHLMVVLVDERPEEVTDMQRSVKGEVIASTFDRPPSDHTSVAELAIERAKRLVEQGKDVVVLLDSITRLGRAYNNASPASGRILSGGVDSTALYPPKRFLGAARNIEEGGSLTIIATAMVETGSTGDTVIFEEFKGTGNAELKLDRKIAERRVFPAVDVNPSGTRKDELLLSPDEFAIVHKLRRVLSGLDSHQAIDLLMSQLRKTKNNYEFLVQVSKTTPGSMDSD.

2 disordered regions span residues 1–35 (MTDTDLITAGESTDGKPSDAAATDPPDLNADEPAG) and 76–216 (ANGA…AEAE). Residues 85–96 (SAQEHDKGDRPP) show a composition bias toward basic and acidic residues. Residues 100–120 (APATQGEQTPTEQIDSQSQQV) show a composition bias toward polar residues. A compositionally biased stretch (low complexity) spans 172–182 (GDQQASGGQQA). Basic and acidic residues predominate over residues 183 to 192 (RGDEDGEARQ). Over residues 193–206 (GRRGRRFRDRRRRG) the composition is skewed to basic residues. In terms of domain architecture, Rho RNA-BD spans 223 to 301 (VQPVAGILDV…VRLDSINGGS (79 aa)). ATP is bound by residues 344-349 (GKGQRA), 356-361 (KAGKTT), and Arg387.

This sequence belongs to the Rho family. Homohexamer. The homohexamer assembles into an open ring structure.

Its function is as follows. Facilitates transcription termination by a mechanism that involves Rho binding to the nascent RNA, activation of Rho's RNA-dependent ATPase activity, and release of the mRNA from the DNA template. This Mycobacterium bovis (strain ATCC BAA-935 / AF2122/97) protein is Transcription termination factor Rho.